The following is a 397-amino-acid chain: 3-ketoacyl-CoA thiolase, mitochondrial (397 aa).

Residues 1–16 (MALLRGVFIVAAKRTP) constitute a mitochondrion; not cleaved transit peptide. The residue at position 25 (Lys25) is an N6-acetyllysine; alternate. Residue Lys25 is modified to N6-succinyllysine; alternate. Ser28 carries the post-translational modification Phosphoserine. The residue at position 45 (Lys45) is an N6-succinyllysine. The active-site Acyl-thioester intermediate is the Cys92. Residue Thr119 is modified to Phosphothreonine. Residue Ser121 is modified to Phosphoserine. A Phosphotyrosine modification is found at Tyr127. Thr136 is subject to Phosphothreonine. N6-acetyllysine; alternate is present on residues Lys137, Lys143, Lys158, Lys171, Lys191, and Lys209. N6-succinyllysine; alternate occurs at positions 137, 143, 158, 171, 191, and 209. Lys211, Lys212, and Lys214 each carry N6-succinyllysine. CoA-binding residues include Arg224 and Thr227. At Lys234 the chain carries N6-acetyllysine; alternate. Position 234 is an N6-succinyllysine; alternate (Lys234). Lys240 is subject to N6-succinyllysine. At Lys241 the chain carries N6-acetyllysine. Ser251 contributes to the CoA binding site. An N6-acetyllysine mark is found at Lys269 and Lys270. At Lys305 the chain carries N6-acetyllysine; alternate. Lys305 bears the N6-succinyllysine; alternate mark. Phosphoserine is present on Ser310. Lys312 is subject to N6-acetyllysine; alternate. The residue at position 312 (Lys312) is an N6-succinyllysine; alternate. The residue at position 340 (Lys340) is an N6-acetyllysine. Ser344 is subject to Phosphoserine. N6-acetyllysine is present on Lys375. Cys382 acts as the Proton donor/acceptor in catalysis.

It belongs to the thiolase-like superfamily. Thiolase family. Homotetramer. Interacts with BNIP3.

It localises to the mitochondrion. The enzyme catalyses an acyl-CoA + acetyl-CoA = a 3-oxoacyl-CoA + CoA. It carries out the reaction 2 acetyl-CoA = acetoacetyl-CoA + CoA. The catalysed reaction is acetyl-CoA + H2O = acetate + CoA + H(+). It catalyses the reaction propanoyl-CoA + H2O = propanoate + CoA + H(+). The enzyme catalyses butanoyl-CoA + H2O = butanoate + CoA + H(+). It carries out the reaction hexanoyl-CoA + H2O = hexanoate + CoA + H(+). The catalysed reaction is octanoyl-CoA + H2O = octanoate + CoA + H(+). It catalyses the reaction decanoyl-CoA + H2O = decanoate + CoA + H(+). The enzyme catalyses dodecanoyl-CoA + H2O = dodecanoate + CoA + H(+). It carries out the reaction tetradecanoyl-CoA + H2O = tetradecanoate + CoA + H(+). The catalysed reaction is hexadecanoyl-CoA + H2O = hexadecanoate + CoA + H(+). The protein operates within lipid metabolism; fatty acid beta-oxidation. In the production of energy from fats, this is one of the enzymes that catalyzes the last step of the mitochondrial beta-oxidation pathway, an aerobic process breaking down fatty acids into acetyl-CoA. Using free coenzyme A/CoA, catalyzes the thiolytic cleavage of medium- to long-chain unbranched 3-oxoacyl-CoAs into acetyl-CoA and a fatty acyl-CoA shortened by two carbon atoms. Also catalyzes the condensation of two acetyl-CoA molecules into acetoacetyl-CoA and could be involved in the production of ketone bodies. Also displays hydrolase activity on various fatty acyl-CoAs. Thereby, could be responsible for the production of acetate in a side reaction to beta-oxidation. Abolishes BNIP3-mediated apoptosis and mitochondrial damage. This chain is 3-ketoacyl-CoA thiolase, mitochondrial (Acaa2), found in Mus musculus (Mouse).